We begin with the raw amino-acid sequence, 200 residues long: Phospholipase A2 inhibitor CNF (200 aa).

An N-terminal signal peptide occupies residues 1–19 (MKYLHTICLLFIFVARGNS). Intrachain disulfides connect Cys-22-Cys-46, Cys-25-Cys-32, Cys-39-Cys-67, Cys-73-Cys-94, Cys-95-Cys-100, Cys-118-Cys-143, Cys-136-Cys-165, and Cys-169-Cys-191. Asn-176 carries an N-linked (GlcNAc...) asparagine; partial glycan.

In terms of assembly, occurs as a mixture of oligomers. Tetrameric arrangement appears to be the predominant quaternary structure. Interacts with phospholipase A2 crotoxin basic subunit CBd; the interaction leads to dissociation of the CA-CB heterodimer and to inhibition of PLA2 activity of the CB subunit. The carbohydrate moiety increases the inhibition capacity of CNF, but is not essential for activity and for oligomerization. As to expression, expressed by the liver.

It localises to the secreted. Functionally, inhibits the PLA2 activity of crotoxin (CTX) by replacing the acid subunit (CA) in the CTX complex. Displays a pro-inflammatory action through activation of important main signaling pathways for human leukocytes, in vitro. Abolishes both the muscle-paralyzing and muscle-damaging activities of CTX in mice phrenic nerve-diaphragm muscle preparations. The protein is Phospholipase A2 inhibitor CNF of Crotalus durissus terrificus (South American rattlesnake).